A 187-amino-acid chain; its full sequence is dTTP/UTP pyrophosphatase (187 aa).

Asp68 serves as the catalytic Proton acceptor.

The protein belongs to the Maf family. YhdE subfamily. A divalent metal cation is required as a cofactor.

Its subcellular location is the cytoplasm. The enzyme catalyses dTTP + H2O = dTMP + diphosphate + H(+). It catalyses the reaction UTP + H2O = UMP + diphosphate + H(+). In terms of biological role, nucleoside triphosphate pyrophosphatase that hydrolyzes dTTP and UTP. May have a dual role in cell division arrest and in preventing the incorporation of modified nucleotides into cellular nucleic acids. This Thermus thermophilus (strain ATCC BAA-163 / DSM 7039 / HB27) protein is dTTP/UTP pyrophosphatase.